Here is a 500-residue protein sequence, read N- to C-terminus: NAD(P)H-quinone oxidoreductase chain 4, chloroplastic (500 aa).

Transmembrane regions (helical) follow at residues F4–L24, Y35–F55, I87–V107, L134–M154, F167–L187, V208–I228, H242–I262, A272–A292, I305–D325, G330–G350, L386–T406, L411–I431, and L462–V482.

The protein belongs to the complex I subunit 4 family.

It localises to the plastid. The protein resides in the chloroplast thylakoid membrane. It carries out the reaction a plastoquinone + NADH + (n+1) H(+)(in) = a plastoquinol + NAD(+) + n H(+)(out). The catalysed reaction is a plastoquinone + NADPH + (n+1) H(+)(in) = a plastoquinol + NADP(+) + n H(+)(out). The protein is NAD(P)H-quinone oxidoreductase chain 4, chloroplastic of Solanum tuberosum (Potato).